A 382-amino-acid polypeptide reads, in one-letter code: MGAFLDKPKMEKHNAQGQGNGLRYGLSSMQGWRVEMEDAHTAVIGLPSGLETWSFFAVYDGHAGSQVAKYCCEHLLDHITNNQDFKGSAGAPSVENVKNGIRTGFLEIDEHMRVMSEKKHGADRSGSTAVGVLISPQHTYFINCGDSRGLLCRNRKVYFFTQDHKPSNPLEKERIQNAGGSVMIQRVNGSLAVSRALGDFDYKCVHGKGPTEQLVSPEPEVHDIERSEEDDQFIILACDGIWDVMGNEELCDFVRSRLEVTDDLEKVCNEVVDTCLYKGSRDNMSVILICFPNAPKVSPEAVKKEEELDKYLESRVEEIIKKQGEGVPDLVHVMRTLASENIPSLPPGGELASKRNVIEAVYNRLNPYKNDDTDSTSTDDMW.

Gly-2 carries the N-myristoyl glycine lipid modification. In terms of domain architecture, PPM-type phosphatase spans Arg-23 to Phe-291. 4 residues coordinate Mn(2+): Asp-60, Gly-61, Asp-239, and Asp-282. Residues Ser-375 and Ser-377 each carry the phosphoserine modification.

The protein belongs to the PP2C family. In terms of assembly, monomer. Interacts with SMAD2; the interaction dephosphorylates SMAD2 in its C-terminal SXS motif resulting in disruption of the SMAD2/SMAD4 complex, SMAD2 nuclear export and termination of the TGF-beta-mediated signaling. Interacts with SMAD2; the interaction dephosphorylates SMAD2 in its C-terminal SXS motif resulting in disruption of the SMAD2/SMAD4 complex, SMAD2 nuclear export and termination of the TGF-beta-mediated signaling. Interacts with the phosphorylated form of IKBKB/IKKB. Mg(2+) is required as a cofactor. Requires Mn(2+) as cofactor. N-myristoylation is essential for the recognition of its substrates for dephosphorylation.

The protein localises to the nucleus. It localises to the cytoplasm. Its subcellular location is the cytosol. It is found in the membrane. It carries out the reaction O-phospho-L-seryl-[protein] + H2O = L-seryl-[protein] + phosphate. It catalyses the reaction O-phospho-L-threonyl-[protein] + H2O = L-threonyl-[protein] + phosphate. Enzyme with a broad specificity. Negatively regulates TGF-beta signaling through dephosphorylating SMAD2 and SMAD3, resulting in their dissociation from SMAD4, nuclear export of the SMADs and termination of the TGF-beta-mediated signaling. Dephosphorylates PRKAA1 and PRKAA2. Plays an important role in the termination of TNF-alpha-mediated NF-kappa-B activation through dephosphorylating and inactivating IKBKB/IKKB. This Bos taurus (Bovine) protein is Protein phosphatase 1A (PPM1A).